The chain runs to 1165 residues: Error-prone DNA polymerase (1165 aa).

The segment at 1111–1165 (SEGLARPPLPTGADLYEPLTYEPLNGDRRDNPDAPAQRLRHPRDVRILPPSRDFH) is disordered. The segment covering 1152–1165 (PRDVRILPPSRDFH) has biased composition (basic and acidic residues).

The protein belongs to the DNA polymerase type-C family. DnaE2 subfamily.

Its subcellular location is the cytoplasm. The enzyme catalyses DNA(n) + a 2'-deoxyribonucleoside 5'-triphosphate = DNA(n+1) + diphosphate. DNA polymerase involved in damage-induced mutagenesis and translesion synthesis (TLS). It is not the major replicative DNA polymerase. This chain is Error-prone DNA polymerase, found in Rhodopseudomonas palustris (strain HaA2).